Here is a 121-residue protein sequence, read N- to C-terminus: Large ribosomal subunit protein uL18 (121 aa).

This sequence belongs to the universal ribosomal protein uL18 family. Part of the 50S ribosomal subunit; part of the 5S rRNA/L5/L18/L25 subcomplex. Contacts the 5S and 23S rRNAs.

In terms of biological role, this is one of the proteins that bind and probably mediate the attachment of the 5S RNA into the large ribosomal subunit, where it forms part of the central protuberance. This is Large ribosomal subunit protein uL18 from Herpetosiphon aurantiacus (strain ATCC 23779 / DSM 785 / 114-95).